A 510-amino-acid polypeptide reads, in one-letter code: Serine/threonine protein phosphatase 2A 59 kDa regulatory subunit B' eta isoform (510 aa).

Residues 1-87 (MWKQILSKLP…NNNNNNNNGV (87 aa)) form a disordered region. Positions 10–19 (PNKKSSKHEH) are enriched in basic residues. Residues 27 to 42 (HSSSSSHTSGASTSKS) show a composition bias toward low complexity.

Belongs to the phosphatase 2A regulatory subunit B56 family. PP2A consists of a common heteromeric enzyme, composed of a catalytic subunit (subunits C), a constant regulatory subunit (subunit A), and a variety of regulatory subunits such as subunits B (the R2/B/PR55/B55, R3/B''/PR72/PR130/PR59 and R5/B'/B56 families). Interacts with BZR1. Interacts with BRI1.

Its subcellular location is the nucleus. The protein localises to the nucleolus. It localises to the cytoplasm. Functionally, the B regulatory subunit may modulate substrate selectivity and catalytic activity, and may also direct the localization of the catalytic enzyme to a particular subcellular compartment. The holoenzyme composed of PP2AA1, PP2A4 and B'ETA acts as negative regulator of plant innate immunity by controlling BAK1 phosphorylation state and activation in surface-localized immune receptor complexes. Required for the formation of the PP2A holoenzyme that negatively regulates brassinosteroid signaling by dephosphorylating and inactivating BRI1 in the cytoplasm. The chain is Serine/threonine protein phosphatase 2A 59 kDa regulatory subunit B' eta isoform (B'ETA) from Arabidopsis thaliana (Mouse-ear cress).